The following is a 103-amino-acid chain: Large ribosomal subunit protein uL24 (103 aa).

Belongs to the universal ribosomal protein uL24 family. In terms of assembly, part of the 50S ribosomal subunit.

In terms of biological role, one of two assembly initiator proteins, it binds directly to the 5'-end of the 23S rRNA, where it nucleates assembly of the 50S subunit. One of the proteins that surrounds the polypeptide exit tunnel on the outside of the subunit. The protein is Large ribosomal subunit protein uL24 of Corynebacterium urealyticum (strain ATCC 43042 / DSM 7109).